The sequence spans 384 residues: WD repeat-containing protein 55 (384 aa).

A disordered region spans residues 1–33; that stretch reads MDPTCQESPAEDSNNEEDLDSTKAAPRIRDTPE. Positions 9–19 are enriched in acidic residues; that stretch reads PAEDSNNEEDL. 7 WD repeats span residues 36–75, 82–121, 125–163, 166–205, 208–247, 250–289, and 293–332; these read VLEA…GETK, HHLK…LERR, AHSA…PLMD, QHEE…FELL, PQSG…ATSD, ALRA…VVGT, and HAGE…TVVV. Phosphoserine occurs at positions 354 and 383. The interval 362-384 is disordered; it reads LREDEEEAKAPEEVSGESDDDSD. Positions 375 to 384 are enriched in acidic residues; the sequence is VSGESDDDSD.

This sequence belongs to the WD repeat WDR55 family.

It is found in the nucleus. The protein resides in the nucleolus. It localises to the cytoplasm. In terms of biological role, nucleolar protein that acts as a modulator of rRNA synthesis. Plays a central role during organogenesis. The sequence is that of WD repeat-containing protein 55 (Wdr55) from Rattus norvegicus (Rat).